Consider the following 572-residue polypeptide: Beta-fructofuranosidase, insoluble isoenzyme CWINV5 (572 aa).

The signal sequence occupies residues 1–23; sequence MANIVWCNIAMFLLVSLFLTDDA. Substrate-binding positions include 54 to 57 and glutamine 73; that span reads WMND. Aspartate 57 is an active-site residue. An N-linked (GlcNAc...) asparagine glycan is attached at asparagine 84. 118–119 is a substrate binding site; sequence WS. Residues asparagine 152 and asparagine 179 are each glycosylated (N-linked (GlcNAc...) asparagine). Substrate contacts are provided by residues 184-185 and glutamate 239; that span reads RD. 2 N-linked (GlcNAc...) asparagine glycosylation sites follow: asparagine 333 and asparagine 438. Cysteine 434 and cysteine 481 are disulfide-bonded.

This sequence belongs to the glycosyl hydrolase 32 family. In terms of tissue distribution, expressed in flowers, and, to a lower extent, in leaves.

The protein localises to the secreted. It is found in the extracellular space. Its subcellular location is the apoplast. It localises to the cell wall. It catalyses the reaction Hydrolysis of terminal non-reducing beta-D-fructofuranoside residues in beta-D-fructofuranosides.. The chain is Beta-fructofuranosidase, insoluble isoenzyme CWINV5 (CWINV5) from Arabidopsis thaliana (Mouse-ear cress).